Here is a 139-residue protein sequence, read N- to C-terminus: D-ribose pyranase (139 aa).

H20 acts as the Proton donor in catalysis. Residues D28, H106, and 128–130 (YAN) each bind substrate.

This sequence belongs to the RbsD / FucU family. RbsD subfamily. Homodecamer.

The protein localises to the cytoplasm. The catalysed reaction is beta-D-ribopyranose = beta-D-ribofuranose. Its pathway is carbohydrate metabolism; D-ribose degradation; D-ribose 5-phosphate from beta-D-ribopyranose: step 1/2. Functionally, catalyzes the interconversion of beta-pyran and beta-furan forms of D-ribose. The protein is D-ribose pyranase of Salmonella agona (strain SL483).